An 858-amino-acid chain; its full sequence is Ubiquitin carboxyl-terminal hydrolase 5 (858 aa).

Position 2 is an N-acetylalanine (Ala2). The tract at residues 73–98 (LRRTRRPKEEDTSAGTGDPPRKKPTR) is disordered. A Glycyl lysine isopeptide (Lys-Gly) (interchain with G-Cter in SUMO) cross-link involves residue Lys113. Residues Ser149 and Ser156 each carry the phosphoserine modification. A UBP-type; degenerate zinc finger spans residues 175-283 (QVSKHAFNLK…EHLSHFGIDM (109 aa)). Cys195 and Cys816 are disulfide-bonded. Residues Cys199 and Cys202 each coordinate Zn(2+). Substrate is bound at residue Trp209. Cys219 contacts Zn(2+). 221 to 224 (RRYF) contacts substrate. His232 contributes to the Zn(2+) binding site. 3 residues coordinate substrate: Tyr259, Tyr261, and Asp264. At Thr292 the chain carries Phosphothreonine. A USP domain is found at 326-856 (TGIRNLGNSC…LGYIYFYQRV (531 aa)). Cys335 serves as the catalytic Nucleophile. Thr623 carries the phosphothreonine modification. UBA domains follow at residues 654 to 695 (MLDE…VMSH) and 722 to 762 (PPPE…IFSH). Phosphoserine occurs at positions 779, 783, and 785. The active-site Proton acceptor is His818.

Belongs to the peptidase C19 family. In terms of assembly, homodimer. Interacts with TRIML1. Post-translationally, SUMOylated at Lys-113; SUMOylation affects the interaction with Cav3.2 channels. Ubiquitinated by SMURF1; leading to proteasomal degradation.

It is found in the cytoplasm. Its subcellular location is the stress granule. It localises to the nucleus. The enzyme catalyses Thiol-dependent hydrolysis of ester, thioester, amide, peptide and isopeptide bonds formed by the C-terminal Gly of ubiquitin (a 76-residue protein attached to proteins as an intracellular targeting signal).. Deubiquitinating enzyme that participates in a wide range of cellular processes by specifically cleaving isopeptide bonds between ubiquitin and substrate proteins or ubiquitin itself. Affects thereby important cellular signaling pathways such as NF-kappa-B, Wnt/beta-catenin, and cytokine production by regulating ubiquitin-dependent protein degradation. Participates in the activation of the Wnt signaling pathway by promoting FOXM1 deubiquitination and stabilization that induces the recruitment of beta-catenin to Wnt target gene promoter. Regulates the assembly and disassembly of heat-induced stress granules by mediating the hydrolysis of unanchored ubiquitin chains. Promotes lipopolysaccharide-induced apoptosis and inflammatory response by stabilizing the TXNIP protein. Affects T-cell biology by stabilizing the inhibitory receptor on T-cells PDC1. Acts as a negative regulator of autophagy by regulating ULK1 at both protein and mRNA levels. Acts also as a negative regulator of type I interferon production by simultaneously removing both 'Lys-48'-linked unanchored and 'Lys-63'-linked anchored polyubiquitin chains on the transcription factor IRF3. Modulates the stability of DNA mismatch repair protein MLH1 and counteracts the effect of the ubiquitin ligase UBR4. Upon activation by insulin, it gets phosphorylated through mTORC1-mediated phosphorylation to enhance YTHDF1 stability by removing 'Lys-11'-linked polyubiquitination. May also deubiquitinate other substrates such as the calcium channel CACNA1H. This Mus musculus (Mouse) protein is Ubiquitin carboxyl-terminal hydrolase 5 (Usp5).